Reading from the N-terminus, the 119-residue chain is Large ribosomal subunit protein uL14 (119 aa).

Belongs to the universal ribosomal protein uL14 family. As to quaternary structure, part of the 50S ribosomal subunit. Forms a cluster with proteins L3 and L19. In the 70S ribosome, L14 and L19 interact and together make contacts with the 16S rRNA in bridges B5 and B8.

In terms of biological role, binds to 23S rRNA. Forms part of two intersubunit bridges in the 70S ribosome. This chain is Large ribosomal subunit protein uL14, found in Anaplasma phagocytophilum (strain HZ).